We begin with the raw amino-acid sequence, 577 residues long: Alpha-1,2-mannosyltransferase alg9 (577 aa).

The first 29 residues, 1-29, serve as a signal peptide directing secretion; that stretch reads MPSKAPRKSLSVSFVWTFSILAVLRLTSA. Over 30–68 the chain is Extracellular; it reads SFRVIDDCDEVYNYWEPLHYLLYGYGLQTWEYSPEYAIR. A helical membrane pass occupies residues 69-89; that stretch reads SWFYIALHAVPGFLARGLGLS. Residues 90–95 lie on the Cytoplasmic side of the membrane; it reads RLHVFY. Residues 96 to 116 form a helical membrane-spanning segment; sequence FIRGVLACFSAFCETNLILAV. Residues 117–136 lie on the Extracellular side of the membrane; the sequence is ARNFNRAVALHLTSVLFVNS. Residues 137–159 form a helical membrane-spanning segment; it reads GMWSASTSFLPSSFAMNMVTLAL. Residues 160–176 lie on the Cytoplasmic side of the membrane; that stretch reads SAQLSPPSTKRTVKVVS. The helical transmembrane segment at 177-197 threads the bilayer; the sequence is FITIGAVIGWPFSAALSIPFI. Topologically, residues 198–217 are extracellular; that stretch reads LLELVDLKGRFRHLFCRWFK. A helical transmembrane segment spans residues 218 to 238; sequence AIFVALLITGICITVDSLFYH. The Cytoplasmic segment spans residues 239 to 280; it reads RIQFVAWNIVKYNVLAKDGRGPDIYGTEPWWYYFANLSLQHN. The helical transmembrane segment at 281–301 threads the bilayer; it reads IVLWFAMACGPLVLLAAFTNW. The Extracellular segment spans residues 302–305; sequence INLD. A helical transmembrane segment spans residues 306–326; the sequence is SFLDLSSVISPFYIWLFIFII. Residues 327–333 are Cytoplasmic-facing; the sequence is QPHKEER. Residues 334 to 354 form a helical membrane-spanning segment; it reads FMYPIYPVLCLAAAIGLDMSL. At 355-375 the chain is on the extracellular side; sequence KLMIQILSSINETVRSKFPVR. The helical transmembrane segment at 376–396 threads the bilayer; sequence FVVLCVYAIIGCLSIARILAI. Residues 397 to 577 lie on the Cytoplasmic side of the membrane; the sequence is QNYNAPMIIY…NLRRASKQQA (181 aa).

Belongs to the glycosyltransferase 22 family.

It localises to the endoplasmic reticulum membrane. The catalysed reaction is an alpha-D-Man-(1-&gt;2)-alpha-D-Man-(1-&gt;2)-alpha-D-Man-(1-&gt;3)-[alpha-D-Man-(1-&gt;3)-alpha-D-Man-(1-&gt;6)]-beta-D-Man-(1-&gt;4)-beta-D-GlcNAc-(1-&gt;4)-alpha-D-GlcNAc-diphospho-di-trans,poly-cis-dolichol + a di-trans,poly-cis-dolichyl beta-D-mannosyl phosphate = an alpha-D-Man-(1-&gt;2)-alpha-D-Man-(1-&gt;2)-alpha-D-Man-(1-&gt;3)-[alpha-D-Man-(1-&gt;2)-alpha-D-Man-(1-&gt;3)-alpha-D-Man-(1-&gt;6)]-beta-D-Man-(1-&gt;4)-beta-D-GlcNAc-(1-&gt;4)-alpha-D-GlcNAc-diphospho-di-trans,poly-cis-dolichol + a di-trans,poly-cis-dolichyl phosphate + H(+). It catalyses the reaction an alpha-D-Man-(1-&gt;2)-alpha-D-Man-(1-&gt;2)-alpha-D-Man-(1-&gt;3)-[alpha-D-Man-(1-&gt;2)-alpha-D-Man-(1-&gt;3)-[alpha-D-Man-(1-&gt;6)]-alpha-D-Man-(1-&gt;6)]-beta-D-Man-(1-&gt;4)-beta-D-GlcNAc-(1-&gt;4)-alpha-D-GlcNAc-diphospho-di-trans,poly-cis-dolichol + a di-trans,poly-cis-dolichyl beta-D-mannosyl phosphate = an alpha-D-Man-(1-&gt;2)-alpha-D-Man-(1-&gt;2)-alpha-D-Man-(1-&gt;3)-[alpha-D-Man-(1-&gt;2)-alpha-D-Man-(1-&gt;3)-[alpha-D-Man-(1-&gt;2)-alpha-D-Man-(1-&gt;6)]-alpha-D-Man-(1-&gt;6)]-beta-D-Man-(1-&gt;4)-beta-D-GlcNAc-(1-&gt;4)-alpha-D-GlcNAc-diphospho-di-trans,poly-cis-dolichol + a di-trans,poly-cis-dolichyl phosphate + H(+). It participates in protein modification; protein glycosylation. Its function is as follows. Catalyzes the transfer of mannose from Dol-P-Man to lipid-linked oligosaccharides. The protein is Alpha-1,2-mannosyltransferase alg9 (alg9) of Schizosaccharomyces pombe (strain 972 / ATCC 24843) (Fission yeast).